A 114-amino-acid polypeptide reads, in one-letter code: T cell receptor beta variable 5-6 (114 aa).

Residues 1-21 (MGPGLLCWALLCLLGAGLVDA) form the signal peptide. The Ig-like domain occupies 22–114 (GVTQSPTHLI…SALYLCASSL (93 aa)). An intrachain disulfide couples Cys42 to Cys110. Residue Asn90 is glycosylated (N-linked (GlcNAc...) asparagine).

As to quaternary structure, alpha-beta TR is a heterodimer composed of an alpha and beta chain; disulfide-linked. The alpha-beta TR is associated with the transmembrane signaling CD3 coreceptor proteins to form the TR-CD3 (TcR or TCR). The assembly of alpha-beta TR heterodimers with CD3 occurs in the endoplasmic reticulum where a single alpha-beta TR heterodimer associates with one CD3D-CD3E heterodimer, one CD3G-CD3E heterodimer and one CD247 homodimer forming a stable octameric structure. CD3D-CD3E and CD3G-CD3E heterodimers preferentially associate with TR alpha and TR beta chains, respectively. The association of the CD247 homodimer is the last step of TcR assembly in the endoplasmic reticulum and is required for transport to the cell surface.

The protein localises to the cell membrane. Its function is as follows. V region of the variable domain of T cell receptor (TR) beta chain that participates in the antigen recognition. Alpha-beta T cell receptors are antigen specific receptors which are essential to the immune response and are present on the cell surface of T lymphocytes. Recognize peptide-major histocompatibility (MH) (pMH) complexes that are displayed by antigen presenting cells (APC), a prerequisite for efficient T cell adaptive immunity against pathogens. Binding of alpha-beta TR to pMH complex initiates TR-CD3 clustering on the cell surface and intracellular activation of LCK that phosphorylates the ITAM motifs of CD3G, CD3D, CD3E and CD247 enabling the recruitment of ZAP70. In turn ZAP70 phosphorylates LAT, which recruits numerous signaling molecules to form the LAT signalosome. The LAT signalosome propagates signal branching to three major signaling pathways, the calcium, the mitogen-activated protein kinase (MAPK) kinase and the nuclear factor NF-kappa-B (NF-kB) pathways, leading to the mobilization of transcription factors that are critical for gene expression and essential for T cell growth and differentiation. The T cell repertoire is generated in the thymus, by V-(D)-J rearrangement. This repertoire is then shaped by intrathymic selection events to generate a peripheral T cell pool of self-MH restricted, non-autoaggressive T cells. Post-thymic interaction of alpha-beta TR with the pMH complexes shapes TR structural and functional avidity. This Homo sapiens (Human) protein is T cell receptor beta variable 5-6.